We begin with the raw amino-acid sequence, 545 residues long: Propane 2-monooxygenase, hydroxylase component large subunit (545 aa).

Residues glutamate 97, glutamate 127, histidine 130, glutamate 192, glutamate 226, and histidine 229 each coordinate Fe cation.

The protein belongs to the TmoA/XamoA family. The propane 2-monooxygenase multicomponent enzyme system is composed of an electron transfer component and a monooxygenase component interacting with the effector protein PrmD. The electron transfer component is composed of a reductase (PrmB), and the monooxygenase component is formed by a large subunit (PrmA) and a small subunit (PrmC). Probably requires the presence of the chaperonin-like protein PrmG to ensure a productive folding, resulting of a soluble PrmA, which leads to the active form of PrmABCD. Requires Fe(2+) as cofactor.

It catalyses the reaction propane + NADH + O2 + H(+) = propan-2-ol + NAD(+) + H2O. It carries out the reaction phenol + NADH + O2 + H(+) = hydroquinone + NAD(+) + H2O. Functionally, component of the propane 2-monooxygenase multicomponent enzyme system which is involved in the degradation of propane via the O2-dependent hydroxylation of propane. Under acetone induction, also able to catalyze the oxidation of phenol to yield hydroquinone. The chain is Propane 2-monooxygenase, hydroxylase component large subunit from Gordonia sp. (strain TY-5).